The following is a 309-amino-acid chain: Vomeronasal type-1 receptor 52 (309 aa).

Over 1-19 (MNKDHTLYCSVYIRNAFFS) the chain is Extracellular. Residues 20-40 (EIGIGISANSCLLLFHTFMFI) form a helical membrane-spanning segment. The Cytoplasmic portion of the chain corresponds to 41–49 (RGHRPRLTD). Residues 50 to 70 (LPIGFVALIHLVMLLLAAYIT) form a helical membrane-spanning segment. Residues 71 to 93 (EDFFMSSGGWDDITCKLVIFLHR) are Extracellular-facing. The cysteines at positions 85 and 172 are disulfide-linked. A helical membrane pass occupies residues 94-114 (FFRSLSVCATCLLSVFQAIIL). The Cytoplasmic segment spans residues 115 to 134 (CPQSSHLAKLKQNSPHQLSY). Residues 135–155 (FFIFLSIFYTSISSHILIAAI) traverse the membrane as a helical segment. Residues 156–187 (PTQNITFVNLIYITNSCSFLPLSSSMQHTFST) lie on the Extracellular side of the membrane. A glycan (N-linked (GlcNAc...) asparagine) is linked at asparagine 159. A helical transmembrane segment spans residues 188 to 208 (LLAFRNVFVIGLMGLSTCYMA). The Cytoplasmic portion of the chain corresponds to 209 to 238 (TLLCRHKTRSQRLQNSKLSPKATPEQRALR). The helical transmembrane segment at 239-259 (TILMLMSFFLLMSTFDSIISY) threads the bilayer. Topologically, residues 260-268 (SRTILQGNP) are extracellular. A helical transmembrane segment spans residues 269 to 289 (LPFCFQILVAHSYAAVSPLLV). The Cytoplasmic segment spans residues 290-309 (LSNEKRITNLLISMYEKIVL).

The protein belongs to the G-protein coupled receptor 1 family.

It localises to the cell membrane. Functionally, putative pheromone receptor implicated in the regulation of social and reproductive behavior. The polypeptide is Vomeronasal type-1 receptor 52 (Vmn1r52) (Mus musculus (Mouse)).